A 109-amino-acid polypeptide reads, in one-letter code: Flagellar hook-basal body complex protein FliE (109 aa).

The segment at Met-1 to Gly-38 is disordered. A compositionally biased stretch (basic and acidic residues) spans Arg-22–Gly-38.

This sequence belongs to the FliE family.

Its subcellular location is the bacterial flagellum basal body. The polypeptide is Flagellar hook-basal body complex protein FliE (Helicobacter acinonychis (strain Sheeba)).